Here is a 469-residue protein sequence, read N- to C-terminus: 6-phosphofructo-2-kinase/fructose-2,6-bisphosphatase 4 (469 aa).

The segment at 1–249 is 6-phosphofructo-2-kinase; it reads MASPRELTQN…YYLMNIHVTP (249 aa). 46–54 contributes to the ATP binding site; the sequence is GLPARGKTY. Beta-D-fructose 6-phosphate-binding residues include Arg-79 and Arg-103. Asp-129 is a catalytic residue. Thr-131 and Arg-137 together coordinate beta-D-fructose 6-phosphate. The active site involves Cys-159. 168–173 lines the ATP pocket; the sequence is NIVQVK. Lys-173, Arg-194, and Tyr-198 together coordinate beta-D-fructose 6-phosphate. The tract at residues 250–469 is fructose-2,6-bisphosphatase; sequence RSIYLCRHGE…EALVTVPAHQ (220 aa). Arg-256 provides a ligand contact to beta-D-fructose 2,6-bisphosphate. His-257 (tele-phosphohistidine intermediate) is an active-site residue. Beta-D-fructose 2,6-bisphosphate contacts are provided by Asn-263, Gly-269, and Arg-306. Glu-326 functions as the Proton donor/acceptor in the catalytic mechanism. Beta-D-fructose 2,6-bisphosphate-binding residues include Tyr-337, Arg-351, Lys-355, Tyr-366, Gln-392, and Arg-396. 348–351 is an ATP binding site; that stretch reads FALR. ATP-binding positions include 392-396 and Tyr-428; that span reads QAVMR. Thr-444 bears the Phosphothreonine; by PKC mark.

The protein in the C-terminal section; belongs to the phosphoglycerate mutase family. As to quaternary structure, homodimer.

The catalysed reaction is beta-D-fructose 2,6-bisphosphate + H2O = beta-D-fructose 6-phosphate + phosphate. It carries out the reaction beta-D-fructose 6-phosphate + ATP = beta-D-fructose 2,6-bisphosphate + ADP + H(+). Its activity is regulated as follows. The most important regulatory mechanism of these opposing activities is by phosphorylation and dephosphorylation of the enzyme. Functionally, synthesis and degradation of fructose 2,6-bisphosphate. This is 6-phosphofructo-2-kinase/fructose-2,6-bisphosphatase 4 (PFKFB4) from Homo sapiens (Human).